A 187-amino-acid chain; its full sequence is Apolipophorin-3 (187 aa).

Residues Met1–Ala17 form the signal peptide. The propeptide occupies Ser18–Arg22.

The protein belongs to the insect apolipophorin-3 family. As to quaternary structure, equilibrium between a soluble monomer and a bound lipoprotein form. Apolipophorin-3 associates with lipophorin during lipid loading until each particle contains 9 or 14 molecules of apolipophorin-3. In terms of tissue distribution, hemolymph.

The protein resides in the secreted. In terms of biological role, assists in the loading of diacylglycerol, generated from triacylglycerol stores in the fat body through the action of adipokinetic hormone, into lipophorin, the hemolymph lipoprotein. It increases the lipid carrying capacity of lipophorin by covering the expanding hydrophobic surface resulting from diacylglycerol uptake. It thus plays a critical role in the transport of lipids during flight in several species of insects. The sequence is that of Apolipophorin-3 from Hyphantria cunea (Fall webworm moth).